Consider the following 616-residue polypeptide: MPKYRSATTTHGRNMAGARALWRATGMTDADFGKPIIAVVNSFTQFVPGHVHLRDLGKLVAEQIEAAGGVAKEFNTIAVDDGIAMGHGGMLYSLPSRELIADSVEYMVNAHCADAMVCISNCDKITPGMLMASLRLNIPVIFVSGGPMEAGKTKLSDQIIKLDLVDAMIQGADPKVSDSQSDQVERSACPTCGSCSGMFTANSMNCLTEALGLSQPGNGSLLATHADRKQLFLNAGKRIVELTKRYYEQDDESALPRNIASKAAFENAMTLDIAMGGSTNTVLHLLAAAQEAEIDFTMSDIDKLSRKVPQLCKVAPSTQKYHMEDVHRAGGVIGILGELDRAGLLNRDVKNVLGLTLPQTLEQYDIVVTQDDAVKNMFRAGPAGIRTTQAFSQDCRWDTLDDDRSNGCIRSLEHAYSKDGGLAVLYGNFAENGCIVKTAGVDDSILKFTGPAKVYESQDDAVEAILGGKVVAGDVVVIRYEGPKGGPGMQEMLYPTSFLKSMGLGKACALITDGRFSGGTSGLSIGHVSPEAASGGSIGLIEDGDLIAIDIPNRGIQLQVSDAELAARREAQEARGDKAWTPKNRERQVSFALRAYASLATSADKGAVRDKSKLGG.

Aspartate 81 contributes to the Mg(2+) binding site. Cysteine 122 is a binding site for [2Fe-2S] cluster. Mg(2+) contacts are provided by aspartate 123 and lysine 124. Residue lysine 124 is modified to N6-carboxylysine. Cysteine 195 provides a ligand contact to [2Fe-2S] cluster. Glutamate 491 provides a ligand contact to Mg(2+). Serine 517 acts as the Proton acceptor in catalysis.

The protein belongs to the IlvD/Edd family. As to quaternary structure, homodimer. [2Fe-2S] cluster is required as a cofactor. Mg(2+) serves as cofactor.

The enzyme catalyses (2R)-2,3-dihydroxy-3-methylbutanoate = 3-methyl-2-oxobutanoate + H2O. It carries out the reaction (2R,3R)-2,3-dihydroxy-3-methylpentanoate = (S)-3-methyl-2-oxopentanoate + H2O. Its pathway is amino-acid biosynthesis; L-isoleucine biosynthesis; L-isoleucine from 2-oxobutanoate: step 3/4. The protein operates within amino-acid biosynthesis; L-valine biosynthesis; L-valine from pyruvate: step 3/4. Its function is as follows. Functions in the biosynthesis of branched-chain amino acids. Catalyzes the dehydration of (2R,3R)-2,3-dihydroxy-3-methylpentanoate (2,3-dihydroxy-3-methylvalerate) into 2-oxo-3-methylpentanoate (2-oxo-3-methylvalerate) and of (2R)-2,3-dihydroxy-3-methylbutanoate (2,3-dihydroxyisovalerate) into 2-oxo-3-methylbutanoate (2-oxoisovalerate), the penultimate precursor to L-isoleucine and L-valine, respectively. This Escherichia fergusonii (strain ATCC 35469 / DSM 13698 / CCUG 18766 / IAM 14443 / JCM 21226 / LMG 7866 / NBRC 102419 / NCTC 12128 / CDC 0568-73) protein is Dihydroxy-acid dehydratase.